The primary structure comprises 82 residues: Antitoxin MazE2 (82 aa).

In terms of assembly, probably forms a complex with cognate toxin MazF2.

In terms of biological role, antitoxin component of a type II toxin-antitoxin (TA) system. Labile antitoxin that binds to cognate MazF2 toxin and counteracts its endoribonuclease activity. This is Antitoxin MazE2 (mazE2) from Mycobacterium bovis (strain ATCC BAA-935 / AF2122/97).